The primary structure comprises 198 residues: Sorcin (198 aa).

EF-hand domains lie at 29-64 (GQTQ…SGIA), 70-103 (FNLE…AVLN), 100-135 (AVLN…MGFR), and 134-169 (FRLS…LRAL). 10 residues coordinate Ca(2+): Asp83, Asp85, Ser87, Thr89, Glu94, Asp113, Asp115, Ser117, Thr119, and Glu124.

As to quaternary structure, homodimer. Interacts with GCA, RYR2 and ANXA7. Detected in cardiac myocytes.

It is found in the cytoplasm. Its subcellular location is the sarcoplasmic reticulum membrane. Functionally, calcium-binding protein that modulates excitation-contraction coupling in the heart. Contributes to calcium homeostasis in the heart sarcoplasmic reticulum. Modulates the activity of RYR2 calcium channels. This chain is Sorcin (SRI), found in Homo sapiens (Human).